The chain runs to 870 residues: DNA topoisomerase 1 (870 aa).

Residues 1-128 form the Toprim domain; the sequence is MKSPRFRHSQ…RVYKSSFEAA (128 aa). Residues 143–578 form the Topo IA-type catalytic domain; that stretch reads YDGLAYSAKA…QTNAFVQKIT (436 aa). The interval 180–185 is interaction with DNA; the sequence is SSGRVQ. Tyr-299 acts as the O-(5'-phospho-DNA)-tyrosine intermediate in catalysis. C4-type zinc fingers lie at residues 603-627, 693-717, and 784-807; these read CQCP…HPNC, CPKC…QNGC, and CPLC…KRGC.

Belongs to the type IA topoisomerase family. Monomer.

The enzyme catalyses ATP-independent breakage of single-stranded DNA, followed by passage and rejoining.. Releases the supercoiling and torsional tension of DNA, which is introduced during the DNA replication and transcription, by transiently cleaving and rejoining one strand of the DNA duplex. Introduces a single-strand break via transesterification at a target site in duplex DNA. The scissile phosphodiester is attacked by the catalytic tyrosine of the enzyme, resulting in the formation of a DNA-(5'-phosphotyrosyl)-enzyme intermediate and the expulsion of a 3'-OH DNA strand. The free DNA strand then undergoes passage around the unbroken strand, thus removing DNA supercoils. Finally, in the religation step, the DNA 3'-OH attacks the covalent intermediate to expel the active-site tyrosine and restore the DNA phosphodiester backbone. The sequence is that of DNA topoisomerase 1 (topX) from Bacillus anthracis.